A 247-amino-acid chain; its full sequence is 14-3-3-like protein B (247 aa).

It belongs to the 14-3-3 family.

This is 14-3-3-like protein B (GF14B) from Glycine max (Soybean).